The sequence spans 107 residues: uncharacterized protein (107 aa).

Residues 37–59 traverse the membrane as a helical segment; that stretch reads MVFSFLTVMPGDFIKCLFLRFFV.

The protein localises to the membrane. This is an uncharacterized protein from Saccharomyces cerevisiae (strain ATCC 204508 / S288c) (Baker's yeast).